Consider the following 360-residue polypeptide: UDP-N-acetylglucosamine--N-acetylmuramyl-(pentapeptide) pyrophosphoryl-undecaprenol N-acetylglucosamine transferase (360 aa).

UDP-N-acetyl-alpha-D-glucosamine contacts are provided by residues 15 to 17 (TGG), N127, R163, S191, I249, 268 to 273 (ALTVSE), and Q293.

It belongs to the glycosyltransferase 28 family. MurG subfamily.

Its subcellular location is the cell inner membrane. The enzyme catalyses di-trans,octa-cis-undecaprenyl diphospho-N-acetyl-alpha-D-muramoyl-L-alanyl-D-glutamyl-meso-2,6-diaminopimeloyl-D-alanyl-D-alanine + UDP-N-acetyl-alpha-D-glucosamine = di-trans,octa-cis-undecaprenyl diphospho-[N-acetyl-alpha-D-glucosaminyl-(1-&gt;4)]-N-acetyl-alpha-D-muramoyl-L-alanyl-D-glutamyl-meso-2,6-diaminopimeloyl-D-alanyl-D-alanine + UDP + H(+). It participates in cell wall biogenesis; peptidoglycan biosynthesis. In terms of biological role, cell wall formation. Catalyzes the transfer of a GlcNAc subunit on undecaprenyl-pyrophosphoryl-MurNAc-pentapeptide (lipid intermediate I) to form undecaprenyl-pyrophosphoryl-MurNAc-(pentapeptide)GlcNAc (lipid intermediate II). This is UDP-N-acetylglucosamine--N-acetylmuramyl-(pentapeptide) pyrophosphoryl-undecaprenol N-acetylglucosamine transferase from Proteus mirabilis (strain HI4320).